The sequence spans 57 residues: MKTILITQIKSQIGRLPKHKATMKGLGLRNIGDTVERKDTAAIRGMIKKVYYMISIK.

It belongs to the universal ribosomal protein uL30 family. As to quaternary structure, part of the 50S ribosomal subunit.

This Buchnera aphidicola subsp. Cinara cedri (strain Cc) protein is Large ribosomal subunit protein uL30.